Reading from the N-terminus, the 330-residue chain is Phenylalanine--tRNA ligase alpha subunit (330 aa).

E257 contributes to the Mg(2+) binding site.

This sequence belongs to the class-II aminoacyl-tRNA synthetase family. Phe-tRNA synthetase alpha subunit type 1 subfamily. Tetramer of two alpha and two beta subunits. Mg(2+) serves as cofactor.

It is found in the cytoplasm. It catalyses the reaction tRNA(Phe) + L-phenylalanine + ATP = L-phenylalanyl-tRNA(Phe) + AMP + diphosphate + H(+). The polypeptide is Phenylalanine--tRNA ligase alpha subunit (Nostoc sp. (strain PCC 7120 / SAG 25.82 / UTEX 2576)).